The primary structure comprises 2241 residues: Large tegument protein deneddylase (2241 aa).

Positions 1 to 238 are deubiquitination activity; sequence MKVTQASCHQ…IDLTGVVRES (238 aa). Positions 4 to 226 constitute a Peptidase C76 domain; that stretch reads TQASCHQGDI…AARLVSTYRD (223 aa). Active-site residues include Cys-24, Asp-160, and His-162. The disordered stretch occupies residues 239–314; it reads ADTAATTTTA…STTSKTLATA (76 aa). The span at 240-250 shows a compositional bias: low complexity; that stretch reads DTAATTTTAAP. A compositionally biased stretch (pro residues) spans 251-268; sequence SLPPLPDPIVDPGCPPGV. Residues 304 to 314 are compositionally biased toward low complexity; the sequence is PSTTSKTLATA. Residues 327 to 331 form an interaction with inner tegument protein region; the sequence is SSAVP. Disordered stretches follow at residues 1187 to 1230 and 2118 to 2152; these read MTET…PPAD and PIAR…DTSR. 2 stretches are compositionally biased toward basic and acidic residues: residues 1190 to 1199 and 2142 to 2152; these read TSERLDRSLR and QIDHAQDDTSR.

It belongs to the herpesviridae large tegument protein family. Interacts with host CUL1 and CUL4A; these interactions inhibit the E3 ligase activity of cullins. Interacts with inner tegument protein. Interacts with capsid vertex specific component CVC2. Interacts with the major capsid protein/MCP.

It is found in the virion tegument. Its subcellular location is the host cytoplasm. It localises to the host nucleus. The enzyme catalyses Thiol-dependent hydrolysis of ester, thioester, amide, peptide and isopeptide bonds formed by the C-terminal Gly of ubiquitin (a 76-residue protein attached to proteins as an intracellular targeting signal).. In terms of biological role, large tegument protein that plays multiple roles in the viral cycle. During viral entry, remains associated with the capsid while most of the tegument is detached and participates in the capsid transport toward the host nucleus. Plays a role in the routing of the capsid at the nuclear pore complex and subsequent uncoating. Within the host nucleus, acts as a deneddylase and promotes the degradation of nuclear CRLs (cullin-RING ubiquitin ligases) and thereby stabilizes nuclear CRL substrates, while cytoplasmic CRLs remain unaffected. These modifications prevent host cell cycle S-phase progression and create a favorable environment allowing efficient viral genome replication. Participates later in the secondary envelopment of capsids. Indeed, plays a linker role for the association of the outer viral tegument to the capsids together with the inner tegument protein. This is Large tegument protein deneddylase (UL48) from Homo sapiens (Human).